Consider the following 91-residue polypeptide: MIKPLGDRIVLSIDQPEEEKVGGILIANNAKEKPVMGSVVAISETSVGDSKAPKSVKVGDKVMFDKYAGSQVTIDGEDYLIVHEKDILGVL.

It belongs to the GroES chaperonin family. Heptamer of 7 subunits arranged in a ring. Interacts with the chaperonin GroEL.

Its subcellular location is the cytoplasm. Together with the chaperonin GroEL, plays an essential role in assisting protein folding. The GroEL-GroES system forms a nano-cage that allows encapsulation of the non-native substrate proteins and provides a physical environment optimized to promote and accelerate protein folding. GroES binds to the apical surface of the GroEL ring, thereby capping the opening of the GroEL channel. The chain is Co-chaperonin GroES from Oenococcus oeni (strain ATCC BAA-331 / PSU-1).